Consider the following 200-residue polypeptide: BmK-YA precursor (200 aa).

The first 23 residues, 1–23, serve as a signal peptide directing secretion; sequence MIFHQFYSILILCLIFPNQVVQS. The propeptide occupies 24 to 34; that stretch reads DKERQDWIPSD. The interval 30–200 is disordered; it reads WIPSDYGGYM…GYMNPAGRSD (171 aa). A42 carries the post-translational modification Alanine amide. Residues 45-100 constitute a propeptide that is removed on maturation; that stretch reads SDEERQDWIPSDYGGHMNPAGRSDEERQDWIPSDYGGHMNPAGRSNEERQDWIPSD. A108 is modified (alanine amide). A propeptide spanning residues 111 to 144 is cleaved from the precursor; sequence SDEERQDWIPSDYGGHMNPAGRSNEERQDWIPSD. The residue at position 152 (A152) is an Alanine amide. The propeptide occupies 155 to 188; sequence SDEERQDWIPSDYGGHMNPAGRSDEERQDWIPSD. An Alanine amide modification is found at A196. Residues 199–200 constitute a propeptide that is removed on maturation; it reads SD.

As to expression, venom gland.

The protein localises to the secreted. Its function is as follows. Synthetic BmK-YA activates human opioid receptors in vitro, with highest activity on the delta-type/OPRD1 receptor (EC(50)=2.5 uM) and lower activity on mu-type/OPRM1 and kappa-type/OPRK1 receptors (EC(50)=17 uM and 30 uM, respectively). The chain is BmK-YA precursor from Olivierus martensii (Manchurian scorpion).